Here is a 187-residue protein sequence, read N- to C-terminus: BCL2/adenovirus E1B 19 kDa protein-interacting protein 3 (187 aa).

The tract at residues 42 to 86 (LDAQHESGRSSSKSSHCDSPPRSQTPQDTNRAEIDSHSFGEKNST) is disordered. Phosphoserine occurs at positions 48, 60, 77, 79, 85, and 88. Residues 50–63 (RSSSKSSHCDSPPR) show a composition bias toward low complexity. Over residues 71–81 (NRAEIDSHSFG) the composition is skewed to basic and acidic residues. The short motif at 93 to 118 (IERRREVESILKKNSDWIWDWSSRPE) is the BH3 element. Residues 157–177 (VFLPSLLLSHLLAIGLGIYIG) form a helical membrane-spanning segment.

Belongs to the NIP3 family. In terms of assembly, homodimer. Binds to BCL2. Interacts with BNIP3L and ACAA2. Interacts (via BH3 domain) with SPATA18 (via coiled-coil domains). Interacts with BOK; promotes BOK oligomerization. Interacts with PPTC7; this interaction promotes BNIP3 degradation.

The protein localises to the mitochondrion. The protein resides in the mitochondrion outer membrane. Its function is as follows. Apoptosis-inducing protein that can overcome BCL2 suppression. May play a role in repartitioning calcium between the two major intracellular calcium stores in association with BCL2. Involved in mitochondrial quality control via its interaction with SPATA18/MIEAP: in response to mitochondrial damage, participates in mitochondrial protein catabolic process (also named MALM) leading to the degradation of damaged proteins inside mitochondria. The physical interaction of SPATA18/MIEAP, BNIP3 and BNIP3L/NIX at the mitochondrial outer membrane may play a critical role in the translocation of lysosomal proteins from the cytoplasm to the mitochondrial matrix. The physical interaction of SPATA18/MIEAP, BNIP3 and BNIP3L/NIX at the mitochondrial outer membrane regulates the opening of a pore in the mitochondrial double membrane in order to mediate the translocation of lysosomal proteins from the cytoplasm to the mitochondrial matrix. Plays an important role in the calprotectin (S100A8/A9)-induced cell death pathway. The sequence is that of BCL2/adenovirus E1B 19 kDa protein-interacting protein 3 from Mus musculus (Mouse).